A 396-amino-acid chain; its full sequence is uncharacterized protein (396 aa).

N6-(pyridoxal phosphate)lysine is present on K219.

This sequence belongs to the class-V pyridoxal-phosphate-dependent aminotransferase family. It depends on pyridoxal 5'-phosphate as a cofactor.

It is found in the cytoplasm. It localises to the nucleus. This is an uncharacterized protein from Schizosaccharomyces pombe (strain 972 / ATCC 24843) (Fission yeast).